We begin with the raw amino-acid sequence, 201 residues long: Small ribosomal subunit protein uS4c (201 aa).

Residues 20-43 form a disordered region; that stretch reads GLTSKRPRAGSDLRNQSRSGKRSQ. In terms of domain architecture, S4 RNA-binding spans 89–149; it reads MRLDNILFRL…DEQKSRALIQ (61 aa).

It belongs to the universal ribosomal protein uS4 family. Part of the 30S ribosomal subunit. Contacts protein S5. The interaction surface between S4 and S5 is involved in control of translational fidelity.

The protein localises to the plastid. It localises to the chloroplast. In terms of biological role, one of the primary rRNA binding proteins, it binds directly to 16S rRNA where it nucleates assembly of the body of the 30S subunit. Functionally, with S5 and S12 plays an important role in translational accuracy. This chain is Small ribosomal subunit protein uS4c (rps4), found in Buxus microphylla (Littleleaf boxwood).